The following is a 134-amino-acid chain: Parvalbumin-like EF-hand-containing protein (134 aa).

EF-hand domains follow at residues 55–90 (QLDDAIHTAFQSLDKDKSGFIEWNEIKYILSIIPSS) and 96–131 (LTDEEAEAMIQAADTHGDGRINYEEFSELIKKEKIP). The Ca(2+) site is built by Asp-68, Asp-70, Ser-72, Phe-74, Glu-76, Glu-79, Asp-109, Asp-113, and Glu-120.

The protein belongs to the parvalbumin family.

The chain is Parvalbumin-like EF-hand-containing protein from Homo sapiens (Human).